Here is a 236-residue protein sequence, read N- to C-terminus: Phosphoribosylaminoimidazole-succinocarboxamide synthase (236 aa).

Belongs to the SAICAR synthetase family.

It catalyses the reaction 5-amino-1-(5-phospho-D-ribosyl)imidazole-4-carboxylate + L-aspartate + ATP = (2S)-2-[5-amino-1-(5-phospho-beta-D-ribosyl)imidazole-4-carboxamido]succinate + ADP + phosphate + 2 H(+). It functions in the pathway purine metabolism; IMP biosynthesis via de novo pathway; 5-amino-1-(5-phospho-D-ribosyl)imidazole-4-carboxamide from 5-amino-1-(5-phospho-D-ribosyl)imidazole-4-carboxylate: step 1/2. This chain is Phosphoribosylaminoimidazole-succinocarboxamide synthase, found in Pseudomonas syringae pv. tomato (strain ATCC BAA-871 / DC3000).